The following is a 491-amino-acid chain: Probable malate:quinone oxidoreductase (491 aa).

This sequence belongs to the MQO family. FAD serves as cofactor.

It catalyses the reaction (S)-malate + a quinone = a quinol + oxaloacetate. The protein operates within carbohydrate metabolism; tricarboxylic acid cycle; oxaloacetate from (S)-malate (quinone route): step 1/1. This Actinobacillus pleuropneumoniae serotype 7 (strain AP76) protein is Probable malate:quinone oxidoreductase.